A 124-amino-acid chain; its full sequence is MPTINQLVRKGRRDKTAKVKTAALKGSPQRRGVCTRVYTTTPKKPNSALRKVARVRLTSSVEVTAYIPGEGHNLQEHSMVLVRGGRVKDLPGVRYKIIRGSLDTQGVKGRKQARSRYGAKKEKS.

A disordered region spans residues 1–32 (MPTINQLVRKGRRDKTAKVKTAALKGSPQRRG). 3-methylthioaspartic acid is present on aspartate 89. A disordered region spans residues 104 to 124 (TQGVKGRKQARSRYGAKKEKS). A compositionally biased stretch (basic residues) spans 108–118 (KGRKQARSRYG).

Belongs to the universal ribosomal protein uS12 family. As to quaternary structure, part of the 30S ribosomal subunit. Contacts proteins S8 and S17. May interact with IF1 in the 30S initiation complex.

Its function is as follows. With S4 and S5 plays an important role in translational accuracy. Functionally, interacts with and stabilizes bases of the 16S rRNA that are involved in tRNA selection in the A site and with the mRNA backbone. Located at the interface of the 30S and 50S subunits, it traverses the body of the 30S subunit contacting proteins on the other side and probably holding the rRNA structure together. The combined cluster of proteins S8, S12 and S17 appears to hold together the shoulder and platform of the 30S subunit. In Rhodococcus jostii (strain RHA1), this protein is Small ribosomal subunit protein uS12.